The sequence spans 444 residues: ATP-dependent protease ATPase subunit HslU (444 aa).

Residues Ile-20 and 62-67 each bind ATP; that span reads GVGKTE. Positions 137-162 are disordered; it reads LVPPSRGTSGEPERGEDSNARQTFRK. ATP-binding residues include Asp-257, Glu-322, and Arg-394.

This sequence belongs to the ClpX chaperone family. HslU subfamily. In terms of assembly, a double ring-shaped homohexamer of HslV is capped on each side by a ring-shaped HslU homohexamer. The assembly of the HslU/HslV complex is dependent on binding of ATP.

It is found in the cytoplasm. Functionally, ATPase subunit of a proteasome-like degradation complex; this subunit has chaperone activity. The binding of ATP and its subsequent hydrolysis by HslU are essential for unfolding of protein substrates subsequently hydrolyzed by HslV. HslU recognizes the N-terminal part of its protein substrates and unfolds these before they are guided to HslV for hydrolysis. This Bordetella petrii (strain ATCC BAA-461 / DSM 12804 / CCUG 43448) protein is ATP-dependent protease ATPase subunit HslU.